Here is a 425-residue protein sequence, read N- to C-terminus: Serine--tRNA ligase 1 (425 aa).

230–232 is an L-serine binding site; it reads TSE. ATP-binding positions include 261–263 and valine 277; that span reads RRE. Glutamate 284 is an L-serine binding site. Position 348–351 (348–351) interacts with ATP; that stretch reads ELTS. Residue threonine 382 participates in L-serine binding.

This sequence belongs to the class-II aminoacyl-tRNA synthetase family. Type-1 seryl-tRNA synthetase subfamily. As to quaternary structure, homodimer. The tRNA molecule binds across the dimer.

Its subcellular location is the cytoplasm. It carries out the reaction tRNA(Ser) + L-serine + ATP = L-seryl-tRNA(Ser) + AMP + diphosphate + H(+). The catalysed reaction is tRNA(Sec) + L-serine + ATP = L-seryl-tRNA(Sec) + AMP + diphosphate + H(+). The protein operates within aminoacyl-tRNA biosynthesis; selenocysteinyl-tRNA(Sec) biosynthesis; L-seryl-tRNA(Sec) from L-serine and tRNA(Sec): step 1/1. Catalyzes the attachment of serine to tRNA(Ser). Is also able to aminoacylate tRNA(Sec) with serine, to form the misacylated tRNA L-seryl-tRNA(Sec), which will be further converted into selenocysteinyl-tRNA(Sec). The polypeptide is Serine--tRNA ligase 1 (Streptomyces avermitilis (strain ATCC 31267 / DSM 46492 / JCM 5070 / NBRC 14893 / NCIMB 12804 / NRRL 8165 / MA-4680)).